Here is a 304-residue protein sequence, read N- to C-terminus: bZIP transcription factor 50 (304 aa).

The Cytoplasmic portion of the chain corresponds to 1 to 222 (MDVEFFADLD…MQESAVLTET (222 aa)). Disordered stretches follow at residues 26-60 (GSGV…SREA) and 94-163 (GEEE…ERKK). Positions 45-59 (SPESVSSRRPSPSRE) are enriched in low complexity. Residues 127-139 (EKEDVEAEVDGDD) are compositionally biased toward acidic residues. In terms of domain architecture, bZIP spans 141 to 203 (MSKKKRRQMR…NMALRQSLLK (63 aa)). The basic motif stretch occupies residues 143–167 (KKKRRQMRNRDSAMKSRERKKMYVK). Over residues 150–163 (RNRDSAMKSRERKK) the composition is skewed to basic and acidic residues. Residues 169-183 (LETKSKYLEAECRRL) form a leucine-zipper region. A helical transmembrane segment spans residues 223–243 (LPLVSLLWLVSIVCLLPVPGL). Topologically, residues 244-304 (PNRNPVARSS…GPFRLAAAAC (61 aa)) are lumenal.

This sequence belongs to the bZIP family.

It localises to the endoplasmic reticulum membrane. Its subcellular location is the nucleus. Its activity is regulated as follows. Transcriptionally activated by IRE1 in response to endoplasmic reticulum (ER) stress. IRE1 cleaves a 20-bp fragment causing a frameshift of the mRNA transcript, leading to a nuclear isoform of the BZIP50 activator. Transcription factor involved in endoplasmic reticulum (ER) stress response. Acts downstream of the ER stress sensors IRE1, BZIP39 and BZIP60 to activate BiP chaperone genes. In Oryza sativa subsp. japonica (Rice), this protein is bZIP transcription factor 50.